A 218-amino-acid chain; its full sequence is Deoxyribose-phosphate aldolase (218 aa).

Aspartate 89 acts as the Proton donor/acceptor in catalysis. Lysine 152 acts as the Schiff-base intermediate with acetaldehyde in catalysis. The active-site Proton donor/acceptor is lysine 182.

This sequence belongs to the DeoC/FbaB aldolase family. DeoC type 1 subfamily.

It localises to the cytoplasm. It carries out the reaction 2-deoxy-D-ribose 5-phosphate = D-glyceraldehyde 3-phosphate + acetaldehyde. The protein operates within carbohydrate degradation; 2-deoxy-D-ribose 1-phosphate degradation; D-glyceraldehyde 3-phosphate and acetaldehyde from 2-deoxy-alpha-D-ribose 1-phosphate: step 2/2. Its function is as follows. Catalyzes a reversible aldol reaction between acetaldehyde and D-glyceraldehyde 3-phosphate to generate 2-deoxy-D-ribose 5-phosphate. The polypeptide is Deoxyribose-phosphate aldolase (Kocuria rhizophila (strain ATCC 9341 / DSM 348 / NBRC 103217 / DC2201)).